The chain runs to 1738 residues: Interaptin (1738 aa).

Residues 1–248 (MEHSTPLNEE…TYISLFPKVY (248 aa)) are actin-binding. The Cytoplasmic portion of the chain corresponds to 1–1705 (MEHSTPLNEE…RIFPSKNTRP (1705 aa)). Calponin-homology (CH) domains follow at residues 22 to 128 (IAQK…LRYQ) and 146 to 249 (TKPS…KVYQ). 3 disordered regions span residues 285–350 (SKST…SNLS), 1068–1090 (IQQL…SEKD), and 1589–1627 (LQQQ…PNQI). A compositionally biased stretch (low complexity) spans 292-301 (QQNQQQQQQN). Positions 302–316 (LLSPNSYRNSISFSK) are enriched in polar residues. Low complexity-rich tracts occupy residues 317–344 (SPSF…NSTT), 1068–1086 (IQQL…SNQL), and 1589–1617 (LQQQ…SSTP). A coiled-coil region spans residues 373–1598 (EESRVIEKIV…LQQQKQQQQQ (1226 aa)). A helical; Anchor for type IV membrane protein membrane pass occupies residues 1706–1726 (IFDWRALFFIGAAVLAISTLF).

It belongs to the alpha-actinin family.

The protein resides in the nucleus membrane. Its subcellular location is the endoplasmic reticulum membrane. The protein localises to the golgi apparatus. It localises to the golgi stack membrane. It is found in the cytoplasm. The protein resides in the cytoskeleton. Its subcellular location is the microtubule organizing center. The protein localises to the centrosome. In terms of biological role, may function as linker between cellular membranes and the actin cytoskeleton. Required for normal development of fruiting bodies. In Dictyostelium discoideum (Social amoeba), this protein is Interaptin (abpD).